The chain runs to 265 residues: Zinc import ATP-binding protein ZnuC (265 aa).

Residues 6–221 enclose the ABC transporter domain; the sequence is IRLEQVAVTL…PAFVELFGKN (216 aa). 38–45 lines the ATP pocket; that stretch reads GPNGAGKT. The interval 245–265 is disordered; it reads DAPATSSHTHTHVHGDHCKHG.

The protein belongs to the ABC transporter superfamily. Zinc importer (TC 3.A.1.15.5) family. As to quaternary structure, the complex is composed of two ATP-binding proteins (ZnuC), two transmembrane proteins (ZnuB) and a solute-binding protein (ZnuA).

Its subcellular location is the cell inner membrane. It carries out the reaction Zn(2+)(out) + ATP(in) + H2O(in) = Zn(2+)(in) + ADP(in) + phosphate(in) + H(+)(in). In terms of biological role, part of the ABC transporter complex ZnuABC involved in zinc import. Responsible for energy coupling to the transport system. The polypeptide is Zinc import ATP-binding protein ZnuC (Pseudomonas savastanoi pv. phaseolicola (strain 1448A / Race 6) (Pseudomonas syringae pv. phaseolicola (strain 1448A / Race 6))).